The sequence spans 310 residues: Probable metallo-hydrolase Mb2322c (310 aa).

Residues 1–29 (MVATRGRPCPTNFSRPQRPRVAGNGTKSQ) are disordered. Zn(2+) contacts are provided by His137, Asp139, Asp141, His142, His221, Asp242, and His288.

The protein belongs to the metallo-beta-lactamase superfamily. The cofactor is Zn(2+).

The sequence is that of Probable metallo-hydrolase Mb2322c from Mycobacterium bovis (strain ATCC BAA-935 / AF2122/97).